Consider the following 423-residue polypeptide: Protein MANNAN SYNTHESIS-RELATED 2 (423 aa).

Residues 1–6 (MGVDLR) lie on the Cytoplasmic side of the membrane. Residues 7 to 26 (QVVAGILTITMFVMLGQMLH) form a helical; Signal-anchor for type II membrane protein membrane-spanning segment. The Lumenal portion of the chain corresponds to 27–423 (RDYFDAVQEK…KNHLAYSCFC (397 aa)). 264 to 266 (DLR) serves as a coordination point for substrate.

This sequence belongs to the glycosyltransferase GT106 family. As to expression, widely expressed.

The protein resides in the golgi apparatus membrane. The protein operates within glycan biosynthesis. Functionally, glycosyltransferase involved in mannan biosynthesis. This is Protein MANNAN SYNTHESIS-RELATED 2 from Arabidopsis thaliana (Mouse-ear cress).